A 146-amino-acid chain; its full sequence is ATP synthase epsilon chain (146 aa).

Residues 103–122 (SAKKRAEQHMQEAKEKHNER) are disordered.

The protein belongs to the ATPase epsilon chain family. In terms of assembly, F-type ATPases have 2 components, CF(1) - the catalytic core - and CF(0) - the membrane proton channel. CF(1) has five subunits: alpha(3), beta(3), gamma(1), delta(1), epsilon(1). CF(0) has three main subunits: a, b and c.

Its subcellular location is the cell membrane. In terms of biological role, produces ATP from ADP in the presence of a proton gradient across the membrane. In Lactobacillus johnsonii (strain CNCM I-12250 / La1 / NCC 533), this protein is ATP synthase epsilon chain.